The chain runs to 470 residues: Sorting nexin-17 (470 aa).

In terms of domain architecture, PX spans 1–109 (MHFSIPETES…SFLRRAQQET (109 aa)). Positions 36, 38, 62, and 75 each coordinate a 1,2-diacyl-sn-glycero-3-phospho-(1D-myo-inositol-3-phosphate). The Ras-associating domain maps to 115–206 (EEVSLEVLLS…YKIVLRKSYW (92 aa)). The FERM-like stretch occupies residues 115–432 (EEVSLEVLLS…DATRESMVKL (318 aa)). Residues 270–432 (GYLRFDACVA…DATRESMVKL (163 aa)) form a PTB-like F3 module region. Phosphoserine is present on residues Ser336, Ser407, Ser409, Ser415, Ser421, Ser437, and Ser440. The tract at residues 401–426 (GGTLRRSDSQQAVKSPPLLESPDATR) is disordered. Residues 458 to 470 (GNFAFEGIGDEDL) are interacts with the retriever complex.

This sequence belongs to the sorting nexin family. In terms of assembly, monomer. Interacts with APP (via cytoplasmic YXNPXY motif). Interacts with KIF1B. Interacts with the C-termini of P-selectin, PTC, LDLR, VLDLR, LRP1 and LRP8. Interacts with KRIT1 (via N-terminus). Interacts with HRAS. Interacts with ITGB1 and ITGB5 (via NPxY motif). Interacts with CCDC22 and CCDC93; the interaction associates SNX17 with the CCC complex. Interacts (via C-terminus) with VPS26C and VPS35L; the interactions are direct and associate SNX17 with the retriever complex.

The protein localises to the cytoplasm. It localises to the early endosome. The protein resides in the cytoplasmic vesicle membrane. Functionally, critical regulator of endosomal recycling of numerous surface proteins, including integrins, signaling receptor and channels. Binds to NPxY sequences in the cytoplasmic tails of target cargos. Associates with retriever and CCC complexes to prevent lysosomal degradation and promote cell surface recycling of numerous cargos such as integrins ITGB1, ITGB5 and their associated alpha subunits. Also required for maintenance of normal cell surface levels of APP and LRP1. Interacts with membranes containing phosphatidylinositol 3-phosphate (PtdIns(3P)). The sequence is that of Sorting nexin-17 (SNX17) from Homo sapiens (Human).